We begin with the raw amino-acid sequence, 376 residues long: S-adenosylmethionine synthase (376 aa).

Histidine 14 is an ATP binding site. Mg(2+) is bound at residue aspartate 16. Glutamate 42 serves as a coordination point for K(+). L-methionine-binding residues include glutamate 55 and glutamine 98. The flexible loop stretch occupies residues 98-108 (QSPEIALGISS). ATP-binding positions include 158-160 (DGK), 224-225 (RF), aspartate 233, 239-240 (RK), alanine 256, and lysine 260. Aspartate 233 provides a ligand contact to L-methionine. Lysine 264 is an L-methionine binding site.

This sequence belongs to the AdoMet synthase family. In terms of assembly, homotetramer; dimer of dimers. Mg(2+) is required as a cofactor. Requires K(+) as cofactor.

It is found in the cytoplasm. It carries out the reaction L-methionine + ATP + H2O = S-adenosyl-L-methionine + phosphate + diphosphate. The protein operates within amino-acid biosynthesis; S-adenosyl-L-methionine biosynthesis; S-adenosyl-L-methionine from L-methionine: step 1/1. Its function is as follows. Catalyzes the formation of S-adenosylmethionine (AdoMet) from methionine and ATP. The overall synthetic reaction is composed of two sequential steps, AdoMet formation and the subsequent tripolyphosphate hydrolysis which occurs prior to release of AdoMet from the enzyme. The chain is S-adenosylmethionine synthase from Aquifex aeolicus (strain VF5).